The sequence spans 237 residues: CDP-diacylglycerol--serine O-phosphatidyltransferase (237 aa).

Helical transmembrane passes span 3–23 (INPL…LGMM), 25–45 (IFYA…ASLI), 73–93 (VVAF…YNFG), 95–115 (IGMA…ARFN), 124–144 (YSFI…CVLL), 150–170 (FLEG…GVLM), 184–204 (WNLK…VRPL), and 207–227 (LSVF…FLMV).

Belongs to the CDP-alcohol phosphatidyltransferase class-I family.

It localises to the cell membrane. It catalyses the reaction a CDP-1,2-diacyl-sn-glycerol + L-serine = a 1,2-diacyl-sn-glycero-3-phospho-L-serine + CMP + H(+). This is CDP-diacylglycerol--serine O-phosphatidyltransferase (pssA) from Helicobacter pylori (strain J99 / ATCC 700824) (Campylobacter pylori J99).